Here is a 3132-residue protein sequence, read N- to C-terminus: Enniatin synthetase (3132 aa).

The interval 53-466 is condensation 1; it reads ADDKQRAVGH…VEKVDMMTQE (414 aa). Residues 186–212 form a disordered region; that stretch reads NDEHPRQFETPDSSQATPEEDLQPNPS. Residues 495 to 887 form an adenylation 1 region; the sequence is SQSPNKAAVA…GRMDSQVKIR (393 aa). Positions 994 to 1013 are disordered; the sequence is SQKTHSTPSQQSQAAISSGT. Positions 1010–1086 constitute a Carrier 1 domain; the sequence is SSGTDTETKL…GLKAIVIGTS (77 aa). At Ser-1047 the chain carries O-(pantetheine 4'-phosphoryl)serine. The interval 1105 to 1534 is condensation 2; that stretch reads SYAQNRMWFL…ETCISVLPLT (430 aa). The interval 1563 to 1960 is adenylation 2; sequence FREQAAANPE…GRMDNQFKIR (398 aa). The S-adenosyl-L-methionine-dependent N-methyltransferase stretch occupies residues 2021-2177; that stretch reads EGWQDHFESG…YLAEVIDGLI (157 aa). Carrier domains lie at 2504–2578 and 2598–2672; these read FPIS…RQGL and APRT…ESSH. O-(pantetheine 4'-phosphoryl)serine occurs at positions 2538 and 2632. The interval 2719–3124 is condensation 3; the sequence is QDVYPSTQMQ…RHVLEEVCKT (406 aa).

It belongs to the NRP synthetase family. Requires pantetheine 4'-phosphate as cofactor.

It functions in the pathway antibiotic biosynthesis; enniatin biosynthesis. Its function is as follows. Nonribosomal peptide synthetase that synthesizes enniatin by coupling three D-hydroxycarboxylic acids and three L-amino acids via amide and ester bonds in an alternating fashion. Whereas ESYN1 can accept different amino acids as precursors (L-valine, L-isoleucine or L-leucine), only one species of D-hydroxycarboxylic acid can be found in natural enniatin isolates (D-hydroxyisovaleric acid, D-Hiv). D-Hiv stems from L-valine deanimation by a valine aminotransferase to 2-keto-isovaleric acid (2-Kiv), which becomes subsequently reduced by a keto-isovaleric acid reductase (KivR) to D-Hiv. In Fusarium oxysporum (Fusarium vascular wilt), this protein is Enniatin synthetase.